Reading from the N-terminus, the 147-residue chain is 3-dehydroquinate dehydratase (147 aa).

Residue Tyr22 is the Proton acceptor of the active site. Substrate is bound by residues Asn76, His82, and Asp89. The active-site Proton donor is the His102. Substrate-binding positions include 103–104 (IS) and Arg113.

The protein belongs to the type-II 3-dehydroquinase family. In terms of assembly, homododecamer.

It catalyses the reaction 3-dehydroquinate = 3-dehydroshikimate + H2O. Its pathway is metabolic intermediate biosynthesis; chorismate biosynthesis; chorismate from D-erythrose 4-phosphate and phosphoenolpyruvate: step 3/7. Functionally, catalyzes a trans-dehydration via an enolate intermediate. The chain is 3-dehydroquinate dehydratase from Fusobacterium nucleatum subsp. nucleatum (strain ATCC 25586 / DSM 15643 / BCRC 10681 / CIP 101130 / JCM 8532 / KCTC 2640 / LMG 13131 / VPI 4355).